A 167-amino-acid polypeptide reads, in one-letter code: Small ribosomal subunit protein uS5 (167 aa).

Positions 11–74 constitute an S5 DRBM domain; the sequence is LQEKLIAVNR…EKARRAMINV (64 aa).

It belongs to the universal ribosomal protein uS5 family. As to quaternary structure, part of the 30S ribosomal subunit. Contacts proteins S4 and S8.

With S4 and S12 plays an important role in translational accuracy. Functionally, located at the back of the 30S subunit body where it stabilizes the conformation of the head with respect to the body. This Yersinia pseudotuberculosis serotype O:1b (strain IP 31758) protein is Small ribosomal subunit protein uS5.